A 634-amino-acid polypeptide reads, in one-letter code: MSPVSAIPLAYKLCLPRSLISSSRELNPLHITIPNLGMCRRGKSMAPASMSMILTAAVSDDDRVQRRRGNYHSNLWDDDFIQSLSTPYGEPSYRESAERLKGEIKKMFRSMSKEDEELITPLNDLIQRLWMVDSVERLGIDRHFKNEIKSALDYVYSYWNEKGIGCGRDSVVADLNSTALGFRTLRLHGYNVSSEVLKVFEDQNGQFACSPSKTEGEIRSALNLYRASLIAFPGEKVMEDAEIFSSRYLKEAVQKIPDCSLSQEIAYALEYGWHTNMPRLEARNYMDVFGHPSSPWLKKNKTQYMDGEKLLELAKLEFNIFHSLQQEELQYISRWWKDSGLPKLAFSRHRHVEYYTLGSCIATDPKHRAFRLGFVKTCHLNTVLDDIYDTFGTMDEIELFTEAVRRWDPSETESLPDYMKGVYMVLYEALTEMAQEAEKTQGRDTLNYARKAWEIYLDSYIQEAKWIASGYLPTFQEYFENGKISSAYRAAALTPILTLDVPLPEYILKGIDFPSRFNDLASSFLRLRGDTRCYKADRARGEEASCISCYMKDNPGSTEEDALNHINSMINEIIKELNWELLRPDSNIPMPARKHAFDITRALHHLYKYRDGFSVATKETKSLVSRMVLEPVTL.

Residues 1-21 (MSPVSAIPLAYKLCLPRSLIS) constitute a chloroplast transit peptide. Arg348, Asp385, Asp389, Arg526, and Gly529 together coordinate (2E)-geranyl diphosphate. Positions 385 and 389 each coordinate Mg(2+). The DDXXD motif signature appears at 385–389 (DDIYD). Mg(2+) contacts are provided by Gly529 and Asp537.

It belongs to the terpene synthase family. Tpsb subfamily. In terms of assembly, monomer. It depends on Mg(2+) as a cofactor. Mn(2+) is required as a cofactor.

It localises to the plastid. Its subcellular location is the chloroplast. It carries out the reaction (2E)-geranyl diphosphate = (4S)-limonene + diphosphate. It participates in secondary metabolite biosynthesis; terpenoid biosynthesis. Its pathway is terpene metabolism; oleoresin biosynthesis. Its function is as follows. Monoterpene synthase (mono-TPS) involved in the biosynthesis of monoterpene natural products. Catalyzes the conversion of (2E)-geranyl diphosphate (GPP) into (-)-limonene. Not able to use geranylgeranyl pyrophosphate (GGPP) and farnesyl pyrophosphate (FPP) as substrates. The polypeptide is (-)-limonene synthase, chloroplastic (Picea sitchensis (Sitka spruce)).